Consider the following 550-residue polypeptide: Parathyroid hormone 2 receptor (550 aa).

The first 24 residues, 1–24 (MAGLGASLHVWGWLMLGSCLLARA), serve as a signal peptide directing secretion. Residues 27–145 (DSDGTITIEE…GKQEFFERLY (119 aa)) are Extracellular-facing. N-linked (GlcNAc...) asparagine glycans are attached at residues asparagine 51, asparagine 106, asparagine 116, and asparagine 121. A helical membrane pass occupies residues 146-169 (VMYTVGYSISFGSLAVAILIIGYF). Topologically, residues 170–176 (RRLHCTR) are cytoplasmic. The chain crosses the membrane as a helical span at residues 177–196 (NYIHMHLFVSFMLRATSIFV). Residues 197–237 (KDRVVHAHIGVKELESLIMQDDPQNSIEATSVDKSQYIGCK) lie on the Extracellular side of the membrane. The helical transmembrane segment at 238 to 260 (IAVVMFIYFLATNYYWILVEGLY) threads the bilayer. The Cytoplasmic segment spans residues 261-275 (LHNLIFVAFFSDTKY). The chain crosses the membrane as a helical span at residues 276–297 (LWGFILIGWGFPAAFVAAWAVA). The Extracellular segment spans residues 298-316 (RATLADARCWELSAGDIKW). Residues 317–337 (IYQAPILAAIGLNFILFLNTV) form a helical membrane-spanning segment. Topologically, residues 338 to 364 (RVLATKIWETNAVGHDTRKQYRKLAKS) are cytoplasmic. A helical transmembrane segment spans residues 365–383 (TLVLVLVFGVHYIVFVCLP). The Extracellular segment spans residues 384–394 (HSFTGLGWEIR). The helical transmembrane segment at 395–417 (MHCELFFNSFQGFFVSIIYCYCN) threads the bilayer. Residues 418 to 550 (GEVQAEVKKM…GCQGETEDVL (133 aa)) lie on the Cytoplasmic side of the membrane. A compositionally biased stretch (basic and acidic residues) spans 511–531 (EETKEDSGRQGDDILMEKPSR). Positions 511–550 (EETKEDSGRQGDDILMEKPSRPMESNPDTEGCQGETEDVL) are disordered.

This sequence belongs to the G-protein coupled receptor 2 family. As to quaternary structure, binds to TIPF39/TIP39. As to expression, expressed abundantly in brain and pancreas. Also expressed in the testis.

The protein resides in the cell membrane. This is a specific receptor for parathyroid hormone. The activity of this receptor is mediated by G proteins which activate adenylyl cyclase. PTH2R may be responsible for PTH effects in a number of physiological systems. It may play a significant role in pancreatic function. PTH2R presence in neurons indicates that it may function as a neurotransmitter receptor. This is Parathyroid hormone 2 receptor (PTH2R) from Homo sapiens (Human).